Here is a 612-residue protein sequence, read N- to C-terminus: Threonine--tRNA ligase (612 aa).

The catalytic stretch occupies residues 218-509 (NHRKLGVELG…LSEHFGGNFP (292 aa)). The Zn(2+) site is built by Cys-310, His-361, and His-486.

This sequence belongs to the class-II aminoacyl-tRNA synthetase family. Homodimer. It depends on Zn(2+) as a cofactor.

It localises to the cytoplasm. It catalyses the reaction tRNA(Thr) + L-threonine + ATP = L-threonyl-tRNA(Thr) + AMP + diphosphate + H(+). In terms of biological role, catalyzes the attachment of threonine to tRNA(Thr) in a two-step reaction: L-threonine is first activated by ATP to form Thr-AMP and then transferred to the acceptor end of tRNA(Thr). Also edits incorrectly charged L-seryl-tRNA(Thr). The polypeptide is Threonine--tRNA ligase (Helicobacter pylori (strain Shi470)).